A 764-amino-acid chain; its full sequence is Sesterfisherol synthase (764 aa).

The interval Glu2–Asn331 is terpene cyclase. Asp95 is a Mg(2+) binding site. Residues Asp95, Arg187–Asp190, Asn231, Ser235–Glu239, and Arg324–His325 each bind substrate. The DDXXD 1 motif lies at Asp95–Glu99. The NSE/DTE signature appears at Asn231–Glu239. A prenyltransferase region spans residues Ser332–Leu759. Residues Leu347–Arg372 are disordered. Residues Ile348–Lys358 show a composition bias toward polar residues. Positions 476, 479, and 508 each coordinate isopentenyl diphosphate. Residues Asp515 and Asp519 each contribute to the Mg(2+) site. Residues Asp515–Asp519 carry the DDXXD 2 motif. Dimethylallyl diphosphate is bound at residue Arg524. Arg525 is a binding site for isopentenyl diphosphate. Residues Lys602, Thr603, Gln638, Asn645, Lys655, and Lys665 each coordinate dimethylallyl diphosphate.

The protein in the N-terminal section; belongs to the terpene synthase family. This sequence in the C-terminal section; belongs to the FPP/GGPP synthase family. In terms of assembly, hexamer. Mg(2+) is required as a cofactor.

It catalyses the reaction isopentenyl diphosphate + (2E,6E)-farnesyl diphosphate = (2E,6E,10E)-geranylgeranyl diphosphate + diphosphate. It carries out the reaction isopentenyl diphosphate + (2E,6E,10E)-geranylgeranyl diphosphate = (2E,6E,10E,14E)-geranylfarnesyl diphosphate + diphosphate. The enzyme catalyses (2E,6E,10E,14E)-geranylfarnesyl diphosphate + H2O = sesterfisherol + diphosphate. The protein operates within secondary metabolite biosynthesis; terpenoid biosynthesis. Bifunctional terpene synthase; part of the gene cluster that mediates the biosynthesis of sesterfisheric acid. The bifunctional terpene synthase NfSS converts dimethylallyl diphosphate (DMAPP) and isopentenyl diphosphate (IPP) into sesterfisherol. The C-terminal prenyltransferase (PT) domain of NfSS catalyzes formation of geranylfarnesyl pyrophosphate (GFPP), whereas the N-terminal terpene cyclase (TC) domain catalyzes the cyclization of GFPP to sesterfisherol. The cytochrome P450 monooxygenase NfP450 then catalyzes oxidative modifications of sesterfisherol into sesterfisheric acid. The protein is Sesterfisherol synthase of Neosartorya fischeri (strain ATCC 1020 / DSM 3700 / CBS 544.65 / FGSC A1164 / JCM 1740 / NRRL 181 / WB 181) (Aspergillus fischerianus).